We begin with the raw amino-acid sequence, 301 residues long: Ornithine carbamoyltransferase (301 aa).

Carbamoyl phosphate-binding positions include Arg100 and 127–130; that span reads HPCQ. Residues Asn158, Asp221, and 225–226 each bind L-ornithine; that span reads SM. Carbamoyl phosphate is bound by residues Cys260 and Arg288.

This sequence belongs to the aspartate/ornithine carbamoyltransferase superfamily. OTCase family. As to quaternary structure, homododecamer.

It localises to the cytoplasm. The enzyme catalyses carbamoyl phosphate + L-ornithine = L-citrulline + phosphate + H(+). The protein operates within amino-acid biosynthesis; L-arginine biosynthesis; L-arginine from L-ornithine and carbamoyl phosphate: step 1/3. Its function is as follows. Reversibly catalyzes the transfer of the carbamoyl group from carbamoyl phosphate (CP) to the N(epsilon) atom of ornithine (ORN) to produce L-citrulline. This Moritella profunda protein is Ornithine carbamoyltransferase (argF).